We begin with the raw amino-acid sequence, 409 residues long: Peptidase T (409 aa).

Position 78 (His78) interacts with Zn(2+). Asp80 is a catalytic residue. Asp140 serves as a coordination point for Zn(2+). Glu173 acts as the Proton acceptor in catalysis. The Zn(2+) site is built by Glu174, Asp196, and His379.

The protein belongs to the peptidase M20B family. It depends on Zn(2+) as a cofactor.

It localises to the cytoplasm. It catalyses the reaction Release of the N-terminal residue from a tripeptide.. Its function is as follows. Cleaves the N-terminal amino acid of tripeptides. This is Peptidase T from Serratia proteamaculans (strain 568).